We begin with the raw amino-acid sequence, 309 residues long: Ribonuclease Z (309 aa).

Residues H63, H65, D67, H68, H145, D216, and H274 each coordinate Zn(2+). The Proton acceptor role is filled by D67.

Belongs to the RNase Z family. Homodimer. Zn(2+) serves as cofactor.

The enzyme catalyses Endonucleolytic cleavage of RNA, removing extra 3' nucleotides from tRNA precursor, generating 3' termini of tRNAs. A 3'-hydroxy group is left at the tRNA terminus and a 5'-phosphoryl group is left at the trailer molecule.. Zinc phosphodiesterase, which displays some tRNA 3'-processing endonuclease activity. Probably involved in tRNA maturation, by removing a 3'-trailer from precursor tRNA. In Streptococcus equi subsp. equi (strain 4047), this protein is Ribonuclease Z.